A 740-amino-acid polypeptide reads, in one-letter code: Phosphoribosylformylglycinamidine synthase subunit PurL (740 aa).

His-54 is an active-site residue. Residues Tyr-57 and Lys-96 each contribute to the ATP site. A Mg(2+)-binding site is contributed by Glu-98. Residues Ser-99 to His-102 and Arg-121 contribute to the substrate site. The Proton acceptor role is filled by His-100. Residue Asp-122 participates in Mg(2+) binding. Gln-245 provides a ligand contact to substrate. Asp-273 serves as a coordination point for Mg(2+). Substrate is bound at residue Glu-317 to Gln-319. Asp-499 and Gly-536 together coordinate ATP. Residue Asn-537 coordinates Mg(2+). Ser-539 is a binding site for substrate.

This sequence belongs to the FGAMS family. Monomer. Part of the FGAM synthase complex composed of 1 PurL, 1 PurQ and 2 PurS subunits.

It localises to the cytoplasm. It carries out the reaction N(2)-formyl-N(1)-(5-phospho-beta-D-ribosyl)glycinamide + L-glutamine + ATP + H2O = 2-formamido-N(1)-(5-O-phospho-beta-D-ribosyl)acetamidine + L-glutamate + ADP + phosphate + H(+). The protein operates within purine metabolism; IMP biosynthesis via de novo pathway; 5-amino-1-(5-phospho-D-ribosyl)imidazole from N(2)-formyl-N(1)-(5-phospho-D-ribosyl)glycinamide: step 1/2. In terms of biological role, part of the phosphoribosylformylglycinamidine synthase complex involved in the purines biosynthetic pathway. Catalyzes the ATP-dependent conversion of formylglycinamide ribonucleotide (FGAR) and glutamine to yield formylglycinamidine ribonucleotide (FGAM) and glutamate. The FGAM synthase complex is composed of three subunits. PurQ produces an ammonia molecule by converting glutamine to glutamate. PurL transfers the ammonia molecule to FGAR to form FGAM in an ATP-dependent manner. PurS interacts with PurQ and PurL and is thought to assist in the transfer of the ammonia molecule from PurQ to PurL. The protein is Phosphoribosylformylglycinamidine synthase subunit PurL of Anoxybacillus flavithermus (strain DSM 21510 / WK1).